Consider the following 80-residue polypeptide: FXYD domain-containing ion transport regulator 7 (80 aa).

At Met1–Asn23 the chain is on the extracellular side. Residues Thr3, Thr5, and Thr9 are each glycosylated (O-linked (GlcNAc) threonine). Residues Thr24–Ser46 traverse the membrane as a helical segment. Residues Lys47–Val80 lie on the Cytoplasmic side of the membrane. A disordered region spans residues Ala54–Val80. Ser73 carries the phosphoserine modification.

This sequence belongs to the FXYD family. Regulatory subunit of the sodium/potassium-transporting ATPase which is composed of a catalytic alpha subunit, a non-catalytic beta subunit and a FXYD regulatory unit that modulates the enzymatic activity in a tissue- and isoform-specific way by changing affinities of the Na+/K+-ATPase toward Na(+), K(+) or ATP. In terms of processing, O-glycosylated; required for stabilization and translocation to the plasma membrane.

The protein localises to the cell membrane. Its function is as follows. Associates with and regulates the activity of the sodium/potassium-transporting ATPase (NKA) which catalyzes the hydrolysis of ATP coupled with the exchange of Na(+) and K(+) ions across the plasma membrane. Reduces the apparent affinity for external K(+), an effect that depends on the presence of external Na(+) and voltage. Increases the apparent affinity for intracellular Na(+). This is FXYD domain-containing ion transport regulator 7 (FXYD7) from Homo sapiens (Human).